We begin with the raw amino-acid sequence, 262 residues long: Caffeyl-CoA reductase-Etf complex subunit CarD (262 aa).

Belongs to the ETF beta-subunit/FixA family. Part of the homotrimeric caffeyl-CoA reductase-Etf complex composed of (R)-2-hydroxyisocaproyl-CoA dehydratase CarC, and the electron transfer flavoprotein (ETF) alpha (CarE) and beta (CarD) subunits. Requires FAD as cofactor. The cofactor is AMP.

It is found in the cytoplasm. The catalysed reaction is hydrocaffeoyl-CoA + 2 reduced [2Fe-2S]-[ferredoxin] + 2 NAD(+) = (E)-caffeoyl-CoA + 2 oxidized [2Fe-2S]-[ferredoxin] + 2 NADH. Its function is as follows. Caffeyl-CoA reductase-Etf complex catalyzes the reduction of caffeyl-CoA to yield hydrocaffeyl-CoA. It couples the endergonic ferredoxin reduction with NADH as reductant to the exergonic reduction of caffeoyl-CoA with the same reductant. It uses the mechanism of electron bifurcation to overcome the steep energy barrier in ferredoxin reduction. The electron transfer flavoprotein (Etf) mediates the electron transfer between the different donors and acceptors. The complex can also reduce 4-coumaroyl-CoA and feruloyl-CoA. The sequence is that of Caffeyl-CoA reductase-Etf complex subunit CarD from Acetobacterium woodii (strain ATCC 29683 / DSM 1030 / JCM 2381 / KCTC 1655 / WB1).